The chain runs to 86 residues: uncharacterized protein (86 aa).

The chain crosses the membrane as a helical span at residues 12 to 32; it reads IIFIFAIIIIVVLCVITYLYL.

It is found in the membrane. This is an uncharacterized protein from Escherichia coli (strain K12).